The primary structure comprises 107 residues: uncharacterized protein (107 aa).

This is an uncharacterized protein from Homo sapiens (Human).